Consider the following 196-residue polypeptide: Protein TEX261 (196 aa).

The next 5 helical transmembrane spans lie at 3-23 (FMYL…TLAV), 42-62 (SRII…LYVF), 70-90 (IGVG…FPFI), 97-117 (FILS…FFAE), and 125-145 (VLAY…VSLS).

The protein belongs to the SVP26 family.

The protein resides in the membrane. The chain is Protein TEX261 (TEX261) from Pongo abelii (Sumatran orangutan).